The sequence spans 338 residues: MTLIQKIQQQNNLTQQDINEFIQTLINPDIENEEKASLLSEYTNRPLNQVEVTYLVQAMIQTMYPVQPVYPEAMCVCGTGGDKSNSFNISTTVSFVVAAANVNVLKHGNKSITSASGSSDLLNKMGIAATHVPDVEGRMNETGLAFLNATDTYPVMKHIQPIRKMMDGPTIFNILGPMIHPYKLDYQVVGVFNPDFVKAMAETLYDLKRKRAIVLHGANGMDEATLSGDNLIYEVNQETGVTSYYLNAEDVGLKPAANGTLRGGTPAENLEITLDILTGKDHSSKRDVVVLNAGIALYVSEKADSIKEGVQLAQQLIDDGKAFEQYKKTGGQVYDHIG.

5-phospho-alpha-D-ribose 1-diphosphate-binding positions include G78, 81 to 82 (GD), S86, 88 to 91 (NIST), 106 to 114 (KHGNKSITS), and S118. G78 contributes to the anthranilate binding site. A Mg(2+)-binding site is contributed by S90. N109 is an anthranilate binding site. R163 is a binding site for anthranilate. D222 and E223 together coordinate Mg(2+).

This sequence belongs to the anthranilate phosphoribosyltransferase family. As to quaternary structure, homodimer. The cofactor is Mg(2+).

It catalyses the reaction N-(5-phospho-beta-D-ribosyl)anthranilate + diphosphate = 5-phospho-alpha-D-ribose 1-diphosphate + anthranilate. Its pathway is amino-acid biosynthesis; L-tryptophan biosynthesis; L-tryptophan from chorismate: step 2/5. In terms of biological role, catalyzes the transfer of the phosphoribosyl group of 5-phosphorylribose-1-pyrophosphate (PRPP) to anthranilate to yield N-(5'-phosphoribosyl)-anthranilate (PRA). This is Anthranilate phosphoribosyltransferase from Staphylococcus carnosus (strain TM300).